A 252-amino-acid polypeptide reads, in one-letter code: MASSSSSLLILAVACFVSLISPAISQQACKSQNLNSAGPFDSCEDLPVLNSYLHYTYNSSNSSLSVAFVATPSQANGGWVAWAINPTGTKMAGSQAFLAYRSGGGAAPVVKTYNISSYSSLVEGKLAFDFWNLRAESLSGGRIAIFTTVKVPAGADSVNQVWQIGGNVTNGRPGVHPFGPDNLGSHRVLSFTEDAAPGSAPSPGSAPAPGTSGSTTPGTAAGGPGNAGSLTRNVNFGVNLGILVLLGSIFIF.

Positions methionine 1–serine 25 are cleaved as a signal peptide. A DOMON domain is found at leucine 49–glycine 165. N-linked (GlcNAc...) asparagine glycosylation is found at asparagine 58 and asparagine 61. Position 91 (methionine 91) interacts with heme. 2 N-linked (GlcNAc...) asparagine glycosylation sites follow: asparagine 114 and asparagine 167. Histidine 176 is a heme binding site. Residues glutamate 193 to proline 224 are disordered. Residues alanine 195–threonine 219 are compositionally biased toward low complexity. A lipid anchor (GPI-anchor amidated asparagine) is attached at asparagine 226. The propeptide at alanine 227–phenylalanine 252 is removed in mature form.

It depends on heme as a cofactor.

The protein resides in the cell membrane. Functionally, one-heme-containing cytochrome. The sequence is that of Auxin-induced in root cultures protein 12 (AIR12) from Arabidopsis thaliana (Mouse-ear cress).